The following is a 176-amino-acid chain: Cathelicidin-2 (176 aa).

Positions Met1–Ala29 are cleaved as a signal peptide. Gln30 is subject to Pyrrolidone carboxylic acid. The propeptide occupies Gln30 to Val130. Intrachain disulfides connect Cys85-Cys96 and Cys107-Cys124. The disordered stretch occupies residues Ile157–Arg176. Pro173 carries the proline amide modification. Residues Gly174 to Arg176 constitute a propeptide, removed in mature form.

The protein belongs to the cathelicidin family. Elastase is responsible for its maturation. Large granules of neutrophils.

The protein localises to the secreted. Functionally, exerts, in vitro, a potent antimicrobial activity. Probably due to an impairment of the function of the respiratory chain and of energy-dependent activities in the inner membrane of susceptible microorganisms. This Bos taurus (Bovine) protein is Cathelicidin-2 (CATHL2).